The primary structure comprises 114 residues: UPF0342 protein NWMN_1737 (114 aa).

Belongs to the UPF0342 family.

The polypeptide is UPF0342 protein NWMN_1737 (Staphylococcus aureus (strain Newman)).